The following is a 488-amino-acid chain: Malonate-semialdehyde dehydrogenase 2 (488 aa).

Phe-155, Lys-179, Glu-182, Arg-183, and Ser-232 together coordinate NAD(+). The active-site Nucleophile is the Cys-287. Glu-387 is an NAD(+) binding site.

It belongs to the aldehyde dehydrogenase family. IolA subfamily. As to quaternary structure, homotetramer.

It catalyses the reaction 3-oxopropanoate + NAD(+) + CoA + H2O = hydrogencarbonate + acetyl-CoA + NADH + H(+). The catalysed reaction is 2-methyl-3-oxopropanoate + NAD(+) + CoA + H2O = propanoyl-CoA + hydrogencarbonate + NADH + H(+). The protein operates within polyol metabolism; myo-inositol degradation into acetyl-CoA; acetyl-CoA from myo-inositol: step 7/7. In terms of biological role, catalyzes the oxidation of malonate semialdehyde (MSA) and methylmalonate semialdehyde (MMSA) into acetyl-CoA and propanoyl-CoA, respectively. Is involved in a myo-inositol catabolic pathway. Bicarbonate, and not CO2, is the end-product of the enzymatic reaction. The polypeptide is Malonate-semialdehyde dehydrogenase 2 (Bacillus cereus (strain ZK / E33L)).